The following is a 911-amino-acid chain: Protein translocase subunit SecA (911 aa).

ATP-binding positions include Q86, 104–108 (GEGKT), and D512. The Zn(2+) site is built by C895, C897, C906, and H907.

This sequence belongs to the SecA family. In terms of assembly, monomer and homodimer. Part of the essential Sec protein translocation apparatus which comprises SecA, SecYEG and auxiliary proteins SecDF-YajC and YidC. Requires Zn(2+) as cofactor.

It is found in the cell inner membrane. The protein localises to the cytoplasm. The catalysed reaction is ATP + H2O + cellular proteinSide 1 = ADP + phosphate + cellular proteinSide 2.. Functionally, part of the Sec protein translocase complex. Interacts with the SecYEG preprotein conducting channel. Has a central role in coupling the hydrolysis of ATP to the transfer of proteins into and across the cell membrane, serving both as a receptor for the preprotein-SecB complex and as an ATP-driven molecular motor driving the stepwise translocation of polypeptide chains across the membrane. The sequence is that of Protein translocase subunit SecA from Bordetella bronchiseptica (strain ATCC BAA-588 / NCTC 13252 / RB50) (Alcaligenes bronchisepticus).